The chain runs to 343 residues: Dihydroorotase (343 aa).

Zn(2+) is bound by residues histidine 13 and histidine 15. Residues 15-17 (HLR) and asparagine 41 contribute to the substrate site. Zn(2+)-binding residues include lysine 99, histidine 136, and histidine 174. Lysine 99 is subject to N6-carboxylysine. Substrate is bound at residue histidine 136. Residue leucine 219 participates in substrate binding. Aspartate 247 serves as a coordination point for Zn(2+). Aspartate 247 is a catalytic residue. Residues histidine 251 and alanine 263 each contribute to the substrate site.

The protein belongs to the metallo-dependent hydrolases superfamily. DHOase family. Class II DHOase subfamily. In terms of assembly, homodimer. Zn(2+) is required as a cofactor.

The enzyme catalyses (S)-dihydroorotate + H2O = N-carbamoyl-L-aspartate + H(+). The protein operates within pyrimidine metabolism; UMP biosynthesis via de novo pathway; (S)-dihydroorotate from bicarbonate: step 3/3. Its function is as follows. Catalyzes the reversible cyclization of carbamoyl aspartate to dihydroorotate. The polypeptide is Dihydroorotase (Shewanella baltica (strain OS223)).